The following is a 176-amino-acid chain: Probable DNA-directed RNA polymerase subunit delta (176 aa).

In terms of domain architecture, HTH HARE-type spans 14–81 (KSFIDMAYTL…GENLWGLRDW (68 aa)). Positions 114-176 (LGEDEMDDDD…DFEDEEDFKA (63 aa)) are disordered. Composition is skewed to acidic residues over residues 116-145 (EDEM…QVEE) and 153-176 (VIEE…DFKA).

Belongs to the RpoE family. As to quaternary structure, RNAP is composed of a core of 2 alpha, a beta and a beta' subunits. The core is associated with a delta subunit and one of several sigma factors.

Participates in both the initiation and recycling phases of transcription. In the presence of the delta subunit, RNAP displays an increased specificity of transcription, a decreased affinity for nucleic acids, and an increased efficiency of RNA synthesis because of enhanced recycling. The sequence is that of Probable DNA-directed RNA polymerase subunit delta from Staphylococcus aureus (strain bovine RF122 / ET3-1).